A 165-amino-acid polypeptide reads, in one-letter code: SsrA-binding protein (165 aa).

The tract at residues 141–165 (KLHDKRQEEKRKQADREVKSALARY) is disordered. Residues 145-159 (KRQEEKRKQADREVK) show a composition bias toward basic and acidic residues.

The protein belongs to the SmpB family.

It localises to the cytoplasm. Functionally, required for rescue of stalled ribosomes mediated by trans-translation. Binds to transfer-messenger RNA (tmRNA), required for stable association of tmRNA with ribosomes. tmRNA and SmpB together mimic tRNA shape, replacing the anticodon stem-loop with SmpB. tmRNA is encoded by the ssrA gene; the 2 termini fold to resemble tRNA(Ala) and it encodes a 'tag peptide', a short internal open reading frame. During trans-translation Ala-aminoacylated tmRNA acts like a tRNA, entering the A-site of stalled ribosomes, displacing the stalled mRNA. The ribosome then switches to translate the ORF on the tmRNA; the nascent peptide is terminated with the 'tag peptide' encoded by the tmRNA and targeted for degradation. The ribosome is freed to recommence translation, which seems to be the essential function of trans-translation. The polypeptide is SsrA-binding protein (Prochlorococcus marinus (strain MIT 9303)).